The chain runs to 224 residues: Thymidine kinase (224 aa).

ATP-binding positions include 19-26 (GPMFAGKT) and 93-96 (DEVQ). Catalysis depends on glutamate 94, which acts as the Proton acceptor. 4 residues coordinate Zn(2+): cysteine 150, cysteine 153, cysteine 188, and histidine 191.

Belongs to the thymidine kinase family. In terms of assembly, homotetramer.

It is found in the cytoplasm. The enzyme catalyses thymidine + ATP = dTMP + ADP + H(+). This is Thymidine kinase from Mycoplasmoides gallisepticum (strain R(low / passage 15 / clone 2)) (Mycoplasma gallisepticum).